Reading from the N-terminus, the 20-residue chain is Peptide encoded by miPEP171b (20 aa).

As to expression, lateral root initiations.

Regulatory peptide encoded by the primary transcript (pri-miR171b) of the microRNA miR171b that enhances the accumulation of its corresponding mature miRNA. Acts probably as a transcriptional activator of its corresponding pri-miRNA. Has no effect on the accumulation of other miRNAs. Addition of synthetic miPEP171b increases the abundance of miR171b, with consequent reduction of lateral root formation. This chain is Peptide encoded by miPEP171b, found in Medicago truncatula (Barrel medic).